The sequence spans 303 residues: Porphobilinogen deaminase (303 aa).

Cysteine 235 bears the S-(dipyrrolylmethanemethyl)cysteine mark.

This sequence belongs to the HMBS family. As to quaternary structure, monomer. Dipyrromethane is required as a cofactor.

The catalysed reaction is 4 porphobilinogen + H2O = hydroxymethylbilane + 4 NH4(+). The protein operates within porphyrin-containing compound metabolism; protoporphyrin-IX biosynthesis; coproporphyrinogen-III from 5-aminolevulinate: step 2/4. In terms of biological role, tetrapolymerization of the monopyrrole PBG into the hydroxymethylbilane pre-uroporphyrinogen in several discrete steps. The protein is Porphobilinogen deaminase of Campylobacter fetus subsp. fetus (strain 82-40).